Here is a 420-residue protein sequence, read N- to C-terminus: rRNA methyltransferase 3, mitochondrial (420 aa).

A mitochondrion-targeting transit peptide spans 1 to 40 (MAALVRPARFVVRPLLQVVQAWDLDARRWVRALRRSPVKV). The tract at residues 49–88 (EQKRAPGKQPRKAPSEASAQEQREKQPLEESASRAPSTWE) is disordered. Residues 69-80 (EQREKQPLEESA) show a composition bias toward basic and acidic residues. The S-adenosyl-L-methionine site is built by Gly-356, Ile-380, and Leu-389.

Belongs to the class IV-like SAM-binding methyltransferase superfamily. RNA methyltransferase TrmH family. In terms of tissue distribution, expressed at same level in normal liver and hepatocarcinoma.

It localises to the mitochondrion. It catalyses the reaction guanosine(1370) in 16S rRNA + S-adenosyl-L-methionine = 2'-O-methylguanosine(1370) in 16S rRNA + S-adenosyl-L-homocysteine + H(+). Its function is as follows. S-adenosyl-L-methionine-dependent 2'-O-ribose methyltransferase that catalyzes the formation of 2'-O-methylguanosine at position 1370 (Gm1370) in the 16S mitochondrial large subunit ribosomal RNA (mtLSU rRNA), a conserved modification in the peptidyl transferase domain of the mtLSU rRNA. Also required for formation of 2'-O-methyluridine at position 1369 (Um1369) mediated by MRM2. The protein is rRNA methyltransferase 3, mitochondrial of Homo sapiens (Human).